Consider the following 194-residue polypeptide: Imidazoleglycerol-phosphate dehydratase (194 aa).

Belongs to the imidazoleglycerol-phosphate dehydratase family.

The protein resides in the cytoplasm. It catalyses the reaction D-erythro-1-(imidazol-4-yl)glycerol 3-phosphate = 3-(imidazol-4-yl)-2-oxopropyl phosphate + H2O. It functions in the pathway amino-acid biosynthesis; L-histidine biosynthesis; L-histidine from 5-phospho-alpha-D-ribose 1-diphosphate: step 6/9. In Listeria monocytogenes serotype 4a (strain HCC23), this protein is Imidazoleglycerol-phosphate dehydratase.